The primary structure comprises 253 residues: Ubiquinone/menaquinone biosynthesis C-methyltransferase UbiE (253 aa).

S-adenosyl-L-methionine is bound by residues threonine 76, aspartate 97, and 125–126 (NA).

It belongs to the class I-like SAM-binding methyltransferase superfamily. MenG/UbiE family.

The enzyme catalyses a 2-demethylmenaquinol + S-adenosyl-L-methionine = a menaquinol + S-adenosyl-L-homocysteine + H(+). The catalysed reaction is a 2-methoxy-6-(all-trans-polyprenyl)benzene-1,4-diol + S-adenosyl-L-methionine = a 5-methoxy-2-methyl-3-(all-trans-polyprenyl)benzene-1,4-diol + S-adenosyl-L-homocysteine + H(+). Its pathway is quinol/quinone metabolism; menaquinone biosynthesis; menaquinol from 1,4-dihydroxy-2-naphthoate: step 2/2. It functions in the pathway cofactor biosynthesis; ubiquinone biosynthesis. Methyltransferase required for the conversion of demethylmenaquinol (DMKH2) to menaquinol (MKH2) and the conversion of 2-polyprenyl-6-methoxy-1,4-benzoquinol (DDMQH2) to 2-polyprenyl-3-methyl-6-methoxy-1,4-benzoquinol (DMQH2). The sequence is that of Ubiquinone/menaquinone biosynthesis C-methyltransferase UbiE from Rhodopseudomonas palustris (strain BisB5).